Here is a 921-residue protein sequence, read N- to C-terminus: cGMP-dependent 3',5'-cyclic phosphodiesterase (921 aa).

The residue at position 1 (Met1) is an N-acetylmethionine. Disordered stretches follow at residues 1-21 and 177-198; these read MRRQPAASRDLFAQEPVPPGS and ESSVAPEATQNPPEEAAGDQKG. Positions 177–188 are enriched in polar residues; it reads ESSVAPEATQNP. 2 GAF domains span residues 220 to 357 and 389 to 528; these read DASS…STVL and DVSV…GISI. Residues Ser411, Asp426, Ile445, Tyr468, and Thr479 each coordinate 3',5'-cyclic GMP. Residues 558–882 form the PDEase domain; it reads SDDEYTKLLH…EHWTKVSHKF (325 aa). Residue His636 is the Proton donor of the active site. His640, His676, Asp677, and Asp788 together coordinate Zn(2+). Asp677 serves as a coordination point for Mg(2+).

It belongs to the cyclic nucleotide phosphodiesterase family. PDE2 subfamily. Homodimer. The cofactor is Zn(2+). Requires Mg(2+) as cofactor.

The protein localises to the cell membrane. It localises to the cytoplasm. Its subcellular location is the mitochondrion. It is found in the mitochondrion inner membrane. The protein resides in the mitochondrion outer membrane. It catalyses the reaction a nucleoside 3',5'-cyclic phosphate + H2O = a nucleoside 5'-phosphate + H(+). It carries out the reaction 3',5'-cyclic GMP + H2O = GMP + H(+). The enzyme catalyses 3',5'-cyclic AMP + H2O = AMP + H(+). Its activity is regulated as follows. The 3',5'-cyclic-AMP phosphodiesterase activity is stimulated by 3',5'-cyclic GMP. In terms of biological role, cGMP-activated cyclic nucleotide phosphodiesterase with a dual-specificity for the second messengers cAMP and cGMP, which are key regulators of many important physiological processes. Has a higher efficiency with cGMP compared to cAMP. Plays a role in cell growth and migration. Regulates mitochondrial cAMP levels and respiration. Involved in the regulation of mitochondria morphology/dynamics and apoptotic cell death via local modulation of cAMP/PKA signaling in the mitochondrion, including the monitoring of local cAMP levels at the outer mitochondrial membrane and of PKA-dependent phosphorylation of DNM1L. The polypeptide is cGMP-dependent 3',5'-cyclic phosphodiesterase (Bos taurus (Bovine)).